We begin with the raw amino-acid sequence, 588 residues long: Phosphomethylpyrimidine synthase (588 aa).

Residues Asn-212, Met-241, Tyr-270, His-306, 326–328 (SRG), 367–370 (DGLR), and Glu-406 contribute to the substrate site. Residue His-410 participates in Zn(2+) binding. Tyr-433 serves as a coordination point for substrate. A Zn(2+)-binding site is contributed by His-474. Residues Cys-554, Cys-557, and Cys-562 each contribute to the [4Fe-4S] cluster site.

It belongs to the ThiC family. Homodimer. [4Fe-4S] cluster is required as a cofactor.

The enzyme catalyses 5-amino-1-(5-phospho-beta-D-ribosyl)imidazole + S-adenosyl-L-methionine = 4-amino-2-methyl-5-(phosphooxymethyl)pyrimidine + CO + 5'-deoxyadenosine + formate + L-methionine + 3 H(+). Its pathway is cofactor biosynthesis; thiamine diphosphate biosynthesis. Catalyzes the synthesis of the hydroxymethylpyrimidine phosphate (HMP-P) moiety of thiamine from aminoimidazole ribotide (AIR) in a radical S-adenosyl-L-methionine (SAM)-dependent reaction. The sequence is that of Phosphomethylpyrimidine synthase from Bartonella quintana (strain Toulouse) (Rochalimaea quintana).